A 48-amino-acid chain; its full sequence is U1-theraphotoxin-Agm1a (48 aa).

Intrachain disulfides connect Cys-4–Cys-34, Cys-8–Cys-40, and Cys-22–Cys-45. At Met-44 the chain carries Methionine sulfoxide; partial.

The protein belongs to the neurotoxin 12 (Hwtx-2) family. 01 (Ap1a) subfamily. As to expression, expressed by the venom gland.

It localises to the secreted. Functionally, is toxic to both insects and mammals. Induces reversible paralysis when injected into S.frugiperda larvae. Reduces both the amplitude and frequency of responses from muscle (GF-TTM and GF-DLM) pathways in the D.melanogaster giant fiber circuit, suggesting an action at the neuromuscular junction, which is mediated by glutamatergic receptors. In mice, intracranial injection of 30 ug causes increased urination, myoclonus, hypermotility with circular movements followed by respiratory and generalized seizures resulting in death within 25-35 minutes of injection. In Acanthoscurria gomesiana (Tarantula spider), this protein is U1-theraphotoxin-Agm1a.